The chain runs to 343 residues: Anthranilate phosphoribosyltransferase (343 aa).

Residues G81, 84–85 (GD), 91–94 (NLST), 109–117 (KHGNRSVSS), and S121 each bind 5-phospho-alpha-D-ribose 1-diphosphate. Anthranilate is bound at residue G81. S93 contributes to the Mg(2+) binding site. N112 contacts anthranilate. Residue R167 coordinates anthranilate. Residues D226 and E227 each coordinate Mg(2+).

It belongs to the anthranilate phosphoribosyltransferase family. In terms of assembly, homodimer. It depends on Mg(2+) as a cofactor.

The enzyme catalyses N-(5-phospho-beta-D-ribosyl)anthranilate + diphosphate = 5-phospho-alpha-D-ribose 1-diphosphate + anthranilate. It functions in the pathway amino-acid biosynthesis; L-tryptophan biosynthesis; L-tryptophan from chorismate: step 2/5. Its function is as follows. Catalyzes the transfer of the phosphoribosyl group of 5-phosphorylribose-1-pyrophosphate (PRPP) to anthranilate to yield N-(5'-phosphoribosyl)-anthranilate (PRA). The chain is Anthranilate phosphoribosyltransferase from Cellvibrio japonicus (strain Ueda107) (Pseudomonas fluorescens subsp. cellulosa).